Reading from the N-terminus, the 360-residue chain is RNA demethylase ALKBH5 (360 aa).

Positions 1–53 are disordered; it reads MSATYTDLREKLQSLNRDSPKEVRKRKQPASDTEEEDEAGSEPEAEEEEARKV. The segment covering 7 to 22 has biased composition (basic and acidic residues); the sequence is DLREKLQSLNRDSPKE. Over residues 32-48 the composition is skewed to acidic residues; sequence DTEEEDEAGSEPEAEEE. The active site involves Tyr107. The 2-oxoglutarate site is built by Asn161, Tyr163, His172, His234, and Arg245. Cys198 and Cys235 form a disulfide bridge. Residues 261–360 are disordered; that stretch reads EMKSLSSSYQ…PVRKVKMRRH (100 aa). A compositionally biased stretch (polar residues) spans 264–280; the sequence is SLSSSYQPERLQGSNRQ. Over residues 281–290 the composition is skewed to basic residues; sequence HILKPKRSHR. Basic and acidic residues-rich tracts occupy residues 291 to 312 and 330 to 340; these read KADP…ENRR and YWRRSHDHVDT.

Belongs to the alkB family. As to quaternary structure, monomer. It depends on Fe(2+) as a cofactor.

The protein resides in the nucleus speckle. It catalyses the reaction an N(6)-methyladenosine in mRNA + 2-oxoglutarate + O2 = an adenosine in mRNA + formaldehyde + succinate + CO2. In terms of biological role, dioxygenase that specifically demethylates N(6)-methyladenosine (m6A) RNA, the most prevalent internal modification of messenger RNA (mRNA) in higher eukaryotes. Demethylates RNA by oxidative demethylation, which requires molecular oxygen, alpha-ketoglutarate and iron. Demethylation of m6A mRNA affects mRNA processing, translation and export. This chain is RNA demethylase ALKBH5 (alkbh5), found in Xenopus laevis (African clawed frog).